Here is a 342-residue protein sequence, read N- to C-terminus: Oxygen-dependent coproporphyrinogen-III oxidase (342 aa).

A substrate-binding site is contributed by Ser-98. A divalent metal cation-binding residues include His-102 and His-112. His-112 (proton donor) is an active-site residue. 114 to 116 (NYR) lines the substrate pocket. Positions 146 and 176 each coordinate a divalent metal cation. An important for dimerization region spans residues 266-301 (YVEFNLVWDRGTIFGLQTNGRTESILMSLPPLARWE).

Belongs to the aerobic coproporphyrinogen-III oxidase family. In terms of assembly, homodimer. Requires a divalent metal cation as cofactor.

Its subcellular location is the cytoplasm. It catalyses the reaction coproporphyrinogen III + O2 + 2 H(+) = protoporphyrinogen IX + 2 CO2 + 2 H2O. It participates in porphyrin-containing compound metabolism; protoporphyrin-IX biosynthesis; protoporphyrinogen-IX from coproporphyrinogen-III (O2 route): step 1/1. Involved in the heme and chlorophyll biosynthesis. Catalyzes the aerobic oxidative decarboxylation of propionate groups of rings A and B of coproporphyrinogen-III to yield the vinyl groups in protoporphyrinogen-IX. The sequence is that of Oxygen-dependent coproporphyrinogen-III oxidase from Prochlorococcus marinus (strain MIT 9312).